Reading from the N-terminus, the 977-residue chain is Serine/threonine-protein kinase/endoribonuclease IRE1 (977 aa).

A signal peptide spans 1-18; that stretch reads MPARRLLLLLTLLLPGLG. The Lumenal portion of the chain corresponds to 19-443; that stretch reads IFGSTSTVTL…EAPVDSMLKD (425 aa). Asparagine 176 carries N-linked (GlcNAc...) asparagine glycosylation. Polar residues predominate over residues 410 to 419; sequence TSENAPTTVS. A disordered region spans residues 410–434; that stretch reads TSENAPTTVSRDVEEKPAHAPARPE. A helical membrane pass occupies residues 444–464; that stretch reads MATIILSTFLLIGWVAFIITY. Residues 465 to 977 lie on the Cytoplasmic side of the membrane; sequence PLSMHQQQQL…PQPPVTPDAL (513 aa). Positions 491–559 are disordered; it reads QQQQQLPFHP…PSLEQDDGDE (69 aa). Residues 513–552 show a composition bias toward low complexity; it reads TSGPYSESSGTSSPSTSPRASNHSLCSGSSASKAGSSPSL. The Protein kinase domain occupies 571-832; sequence FCPKDVLGHG…AKHVLKHPFF (262 aa). ATP contacts are provided by residues 577–585, lysine 599, and 643–645; these read LGHGAEGTI and ELC. Aspartate 688 functions as the Proton acceptor in the catalytic mechanism. ATP-binding positions include 690–693 and aspartate 711; that span reads KPHN. Serine 724 and serine 729 each carry phosphoserine. Positions 835 to 963 constitute a KEN domain; that stretch reads LEKQLQFFQD…ERLFQPYYFH (129 aa). The segment at 906–907 is interacts with hydroxy-aryl-aldehyde inhibitors; that stretch reads NK. Threonine 973 carries the post-translational modification Phosphothreonine.

The protein belongs to the protein kinase superfamily. Ser/Thr protein kinase family. As to quaternary structure, monomer. Homodimer; disulfide-linked; homodimerization takes place in response to endoplasmic reticulum stress and promotes activation of the kinase and endoribonuclease activities. Dimer formation is driven by hydrophobic interactions within the N-terminal luminal domains and stabilized by disulfide bridges. Interacts (via the luminal region) with DNAJB9/ERdj4; interaction takes place in unstressed cells and promotes recruitment of HSPA5/BiP. Interacts (via the luminal region) with HSPA5/BiP; HSPA5/BiP is a negative regulator of the unfolded protein response (UPR) that prevents homodimerization of ERN1/IRE1 and subsequent activation of the protein. Interaction with HSPA5 also competitively inhibits ERN1 interaction with MANF. Interacts with PDIA6, a negative regulator of the UPR; the interaction is direct and disrupts homodimerization. Interacts with DAB2IP (via PH domain); the interaction occurs in a endoplasmic reticulum stress-induced dependent manner and is required for subsequent recruitment of TRAF2 to ERN1/IRE1. Interacts with TAOK3 and TRAF2. Interacts with RNF13. Interacts with LACC1. Interacts (when unphosphorylated) with DDRGK1; interaction is dependent on UFM1 and takes place in response to endoplasmic reticulum stress, regulating ERN1/IRE1-alpha stability. Interacts (via N-terminus) with P4HB/PDIA1; the interaction is enhanced by phosphorylation of P4HB by FAM20C in response to endoplasmic reticulum stress and results in attenuation of ERN1 activity. Interacts with TMBIM6; this interaction inhibits ERN1 activity. Interacts (via luminal domain) with MANF (via C-terminus); the interaction is decreased in the presence of increasing concentrations of Ca(2+). Requires Mg(2+) as cofactor. Post-translationally, autophosphorylated following homodimerization. Autophosphorylation promotes activation of the endoribonuclease domain. In response to ER stress, phosphorylated at Ser-724, Ser-729 and possibly Ser-726; phosphorylation promotes oligomerization and endoribonuclease activity. Dephosphorylated at Ser-724, Ser-729 and possibly Ser-726 by RPAP2 to abort failed ER-stress adaptation and trigger apoptosis. Phosphorylated at Ser-724; in response to the ER stressor tunicamycin. In terms of processing, ADP-ribosylated by PARP16 upon ER stress, which increases both kinase and endonuclease activities. Ubiquitously expressed. High levels observed in pancreatic tissue.

It localises to the endoplasmic reticulum membrane. It carries out the reaction L-seryl-[protein] + ATP = O-phospho-L-seryl-[protein] + ADP + H(+). The enzyme catalyses L-threonyl-[protein] + ATP = O-phospho-L-threonyl-[protein] + ADP + H(+). The kinase domain is activated by trans-autophosphorylation following homodimerization. Kinase activity is required for activation of the endoribonuclease domain. Endoribonuclease activity is specifically inhibited by hydroxy-aryl-aldehydes (HAA). Its function is as follows. Serine/threonine-protein kinase and endoribonuclease that acts as a key sensor for the endoplasmic reticulum unfolded protein response (UPR). In unstressed cells, the endoplasmic reticulum luminal domain is maintained in its inactive monomeric state by binding to the endoplasmic reticulum chaperone HSPA5/BiP. Accumulation of misfolded proteins in the endoplasmic reticulum causes release of HSPA5/BiP, allowing the luminal domain to homodimerize, promoting autophosphorylation of the kinase domain and subsequent activation of the endoribonuclease activity. The endoribonuclease activity is specific for XBP1 mRNA and excises 26 nucleotides from XBP1 mRNA. The resulting spliced transcript of XBP1 encodes a transcriptional activator protein that up-regulates expression of UPR target genes. Acts as an upstream signal for ER stress-induced GORASP2-mediated unconventional (ER/Golgi-independent) trafficking of CFTR to cell membrane by modulating the expression and localization of SEC16A. The polypeptide is Serine/threonine-protein kinase/endoribonuclease IRE1 (Homo sapiens (Human)).